The chain runs to 127 residues: Holo-[acyl-carrier-protein] synthase (127 aa).

Residues aspartate 8 and glutamate 57 each contribute to the Mg(2+) site.

The protein belongs to the P-Pant transferase superfamily. AcpS family. The cofactor is Mg(2+).

It localises to the cytoplasm. The catalysed reaction is apo-[ACP] + CoA = holo-[ACP] + adenosine 3',5'-bisphosphate + H(+). Transfers the 4'-phosphopantetheine moiety from coenzyme A to a Ser of acyl-carrier-protein. In Ruthia magnifica subsp. Calyptogena magnifica, this protein is Holo-[acyl-carrier-protein] synthase.